A 161-amino-acid chain; its full sequence is Allophycocyanin beta chain (161 aa).

An N4-methylasparagine modification is found at Asn-71. Cys-81 contacts (2R,3E)-phycocyanobilin.

Belongs to the phycobiliprotein family. Heterodimer of an alpha and a beta chain. In terms of processing, contains one covalently linked phycocyanobilin chromophore.

The protein resides in the cellular thylakoid membrane. Light-harvesting photosynthetic bile pigment-protein from the phycobiliprotein complex. Allophycocyanin has a maximum absorption at approximately 650 nanometers. The chain is Allophycocyanin beta chain (apcB) from Mastigocladus laminosus (Fischerella sp.).